The chain runs to 484 residues: Probable cytochrome P450 508A1 (484 aa).

Residues 1–21 (MALFEIIISLFVVYIIHNAIS) form a helical membrane-spanning segment. C428 contributes to the heme binding site.

Belongs to the cytochrome P450 family. Requires heme as cofactor.

It localises to the membrane. This is Probable cytochrome P450 508A1 (cyp508A1-1) from Dictyostelium discoideum (Social amoeba).